Here is a 163-residue protein sequence, read N- to C-terminus: Phosphopantetheine adenylyltransferase (163 aa).

Residue Ser11 participates in substrate binding. Residues 11-12 and His19 contribute to the ATP site; that span reads SF. Residues Lys43, Ala76, and Arg90 each coordinate substrate. ATP is bound by residues 91–93, Glu101, and 126–132; these read GLR and WQALSSS.

This sequence belongs to the bacterial CoaD family. In terms of assembly, homohexamer. Mg(2+) serves as cofactor.

It is found in the cytoplasm. The catalysed reaction is (R)-4'-phosphopantetheine + ATP + H(+) = 3'-dephospho-CoA + diphosphate. It participates in cofactor biosynthesis; coenzyme A biosynthesis; CoA from (R)-pantothenate: step 4/5. Reversibly transfers an adenylyl group from ATP to 4'-phosphopantetheine, yielding dephospho-CoA (dPCoA) and pyrophosphate. The polypeptide is Phosphopantetheine adenylyltransferase (Streptococcus pyogenes serotype M6 (strain ATCC BAA-946 / MGAS10394)).